Here is an 886-residue protein sequence, read N- to C-terminus: Alanine--tRNA ligase (886 aa).

Residues His564, His568, Cys666, and His670 each contribute to the Zn(2+) site.

This sequence belongs to the class-II aminoacyl-tRNA synthetase family. Requires Zn(2+) as cofactor.

The protein localises to the cytoplasm. It carries out the reaction tRNA(Ala) + L-alanine + ATP = L-alanyl-tRNA(Ala) + AMP + diphosphate. In terms of biological role, catalyzes the attachment of alanine to tRNA(Ala) in a two-step reaction: alanine is first activated by ATP to form Ala-AMP and then transferred to the acceptor end of tRNA(Ala). Also edits incorrectly charged Ser-tRNA(Ala) and Gly-tRNA(Ala) via its editing domain. The protein is Alanine--tRNA ligase of Prochlorococcus marinus subsp. pastoris (strain CCMP1986 / NIES-2087 / MED4).